Consider the following 25-residue polypeptide: GLWSKIKEAAKTAGKAAMGFVNEMV.

V25 carries the valine amide modification.

In terms of tissue distribution, expressed by the skin glands.

The protein localises to the secreted. Its function is as follows. Has antimicrobial activity. This Phyllomedusa trinitatis (Trinidad leaf frog) protein is Dermaseptin-5.1TR.